Consider the following 878-residue polypeptide: Alanine--tRNA ligase (878 aa).

Residues His570, His574, Cys672, and His676 each coordinate Zn(2+). Positions Gly844–Ala864 are disordered. The segment covering Ala855–Ala864 has biased composition (low complexity).

It belongs to the class-II aminoacyl-tRNA synthetase family. Zn(2+) is required as a cofactor.

The protein resides in the cytoplasm. It carries out the reaction tRNA(Ala) + L-alanine + ATP = L-alanyl-tRNA(Ala) + AMP + diphosphate. Its function is as follows. Catalyzes the attachment of alanine to tRNA(Ala) in a two-step reaction: alanine is first activated by ATP to form Ala-AMP and then transferred to the acceptor end of tRNA(Ala). Also edits incorrectly charged Ser-tRNA(Ala) and Gly-tRNA(Ala) via its editing domain. This is Alanine--tRNA ligase from Paramagnetospirillum magneticum (strain ATCC 700264 / AMB-1) (Magnetospirillum magneticum).